We begin with the raw amino-acid sequence, 273 residues long: MSSPDIVGILENTKELDRLRKDQEEVLVEINKMHKKLQASPEIVEKPGDISLAKLKNLYIQAKELSENEVTVSNILLTQLDLLLPYGPTGQQRRKLGVVAEGNDQKRKRMKVDSDVIRLSPSMRNQIEAYASLKGEQVAARVTAESADKDEWFVVKVIHFDRETKEVEVLDEEPGDDEEGSGQRTYKLPMLCILPFPKRNDPSNTQEFPPGKHVLAVYPGTTALYKATVVSTPRKRKSDEYLLEFDDDEEDGALPQRTVPFHKVVALPEGHRQ.

The SGF29 C-terminal domain maps to 128–273; that stretch reads EAYASLKGEQ…VVALPEGHRQ (146 aa). Histone H3K4me3 N-terminus binding stretches follow at residues 171–173 and 220–223; these read DEE and GTTA. The tract at residues 245 to 248 is histone H3K4me3 binding; that stretch reads FDDD.

Belongs to the SGF29 family. In terms of tissue distribution, expressed in roots, rosette leaves, cauline leaves, stems and flowers.

It localises to the nucleus. Its function is as follows. Chromatin reader component of the transcription regulatory histone acetylation (HAT) complex SAGA. The protein is SAGA-associated factor 29 homolog B of Arabidopsis thaliana (Mouse-ear cress).